The primary structure comprises 524 residues: Xanthotoxin 5-hydroxylase CYP82C4 (524 aa).

Residues 1 to 21 traverse the membrane as a helical segment; that stretch reads MDTSLFSLFVPILVFVFIALF. Cys-463 serves as a coordination point for heme.

Belongs to the cytochrome P450 family. It depends on heme as a cofactor. Expressed in both primary and lateral roots under iron-deficient conditions, except in apical root zones, and mostly in the root epidermal layer.

The protein resides in the membrane. The catalysed reaction is fraxetin + reduced [NADPH--hemoprotein reductase] + O2 = sideretin (reduced form) + oxidized [NADPH--hemoprotein reductase] + H2O + H(+). It catalyses the reaction xanthotoxin + reduced [NADPH--hemoprotein reductase] + O2 = 5-hydroxyxanthotoxin + oxidized [NADPH--hemoprotein reductase] + H2O + 2 H(+). It participates in phenylpropanoid metabolism. Its function is as follows. Can hydroxylate xanthotoxin (8-methoxypsoralen) to form 5-hydroxyxanthotoxin (5-hydroxy-8-methoxypsoralen) in vivo and in vitro. Involved in the early iron deficiency response, possibly through an IDE1-like mediated pathway. Involved in the pathway of sideretin biosynthesis from feruloyl CoA, a redox-active catecholic metabolite exuded by roots in response to iron deficiency in order to facilitate the uptake of iron; this pathway consists in the successive conversion from feruloyl CoA to scopoletin, from scopoletin to fraxetin and from fraxetin to sideretin. Catalyzes the biosynthesis of sideretin via fraxetin hydroxylation. The polypeptide is Xanthotoxin 5-hydroxylase CYP82C4 (Arabidopsis thaliana (Mouse-ear cress)).